Here is a 332-residue protein sequence, read N- to C-terminus: Glycerol-3-phosphate dehydrogenase [NAD(P)+] (332 aa).

NADPH contacts are provided by Trp13, Arg33, and Lys107. Sn-glycerol 3-phosphate contacts are provided by Lys107, Gly136, and Ser138. Ala140 is an NADPH binding site. Sn-glycerol 3-phosphate-binding residues include Lys191, Asp244, Ser254, Arg255, and Asn256. Lys191 serves as the catalytic Proton acceptor. Arg255 contributes to the NADPH binding site. NADPH is bound at residue Glu280.

It belongs to the NAD-dependent glycerol-3-phosphate dehydrogenase family.

The protein resides in the cytoplasm. It carries out the reaction sn-glycerol 3-phosphate + NAD(+) = dihydroxyacetone phosphate + NADH + H(+). The catalysed reaction is sn-glycerol 3-phosphate + NADP(+) = dihydroxyacetone phosphate + NADPH + H(+). Its pathway is membrane lipid metabolism; glycerophospholipid metabolism. Its function is as follows. Catalyzes the reduction of the glycolytic intermediate dihydroxyacetone phosphate (DHAP) to sn-glycerol 3-phosphate (G3P), the key precursor for phospholipid synthesis. This chain is Glycerol-3-phosphate dehydrogenase [NAD(P)+], found in Alkalilimnicola ehrlichii (strain ATCC BAA-1101 / DSM 17681 / MLHE-1).